The following is a 718-amino-acid chain: U-box domain-containing protein 5 (718 aa).

The U-box domain occupies 218–292; sequence TLPEKFKCTL…SEWCAKNGLD (75 aa). ARM repeat units follow at residues 493-532, 534-571, and 573-613; these read PHGPSKITSSGSLSSLLKIVESQAEHLQEQAMITLKNLSS, MEICLEMVSLDFIQKLTSFLQQKVFCKHSIIILKNLCS, and EKGR…QLCV. The tract at residues 662–704 is disordered; that stretch reads KEEEEEVSSRPEGRTTASPTSQVVTPVTHPEPVKITPSPKKSG. Positions 676–686 are enriched in polar residues; that stretch reads TTASPTSQVVT.

It carries out the reaction S-ubiquitinyl-[E2 ubiquitin-conjugating enzyme]-L-cysteine + [acceptor protein]-L-lysine = [E2 ubiquitin-conjugating enzyme]-L-cysteine + N(6)-ubiquitinyl-[acceptor protein]-L-lysine.. Its pathway is protein modification; protein ubiquitination. Functionally, functions as an E3 ubiquitin ligase. The polypeptide is U-box domain-containing protein 5 (PUB5) (Arabidopsis thaliana (Mouse-ear cress)).